The primary structure comprises 479 residues: PTS system sucrose-specific EIIBC component (479 aa).

The 84-residue stretch at 4–87 (PAVAKELLTL…AKLTGMSEMS (84 aa)) folds into the PTS EIIB type-1 domain. Cys-26 (phosphocysteine intermediate; for EIIB activity) is an active-site residue. Transmembrane regions (helical) follow at residues 112 to 132 (IFVPIIPAIVAGGLLMGIYNL), 158 to 178 (MINTFANAPFVYLPILLAFSA), 182 to 202 (FGGNPYLGAALGMLMVHPDLL), 204 to 224 (GWGFGGASVSGNIPVWNILGF), 232 to 252 (QGSVLPVLVSAFILAKVELGL), 264 to 284 (LTPLLAIFIAGLLTFTVVGPF), 303 to 323 (AGFVGGAVFGLIYAPFVITGM), 345 to 365 (FIFPIAAMSNVSQGAAALAVG), 376 to 396 (IAIPSGVTGLLGITEPAMFGV), 403 to 423 (PFIAAVCAAALSSAFITMFNV), and 448 to 468 (IAGMVIAFLTAFVLTIVLGIG). Residues 120–477 (IVAGGLLMGI…GDRAKVGKKA (358 aa)) form the PTS EIIC type-1 domain.

It localises to the cell inner membrane. The enzyme catalyses N(pros)-phospho-L-histidyl-[protein](out) + sucrose = sucrose 6(G)-phosphate(in) + L-histidyl-[protein]. Functionally, the phosphoenolpyruvate-dependent sugar phosphotransferase system (sugar PTS), a major carbohydrate active transport system, catalyzes the phosphorylation of incoming sugar substrates concomitantly with their translocation across the cell membrane. This system is involved in sucrose transport. The polypeptide is PTS system sucrose-specific EIIBC component (Vibrio alginolyticus).